The primary structure comprises 916 residues: Isoleucine--tRNA ligase (916 aa).

The 'HIGH' region signature appears at Pro-57–His-67. Position 554 (Glu-554) interacts with L-isoleucyl-5'-AMP. A 'KMSKS' region motif is present at residues Lys-595 to Ser-599. Lys-598 serves as a coordination point for ATP. 4 residues coordinate Zn(2+): Cys-885, Cys-888, Cys-905, and Cys-908.

This sequence belongs to the class-I aminoacyl-tRNA synthetase family. IleS type 1 subfamily. In terms of assembly, monomer. Zn(2+) is required as a cofactor.

It is found in the cytoplasm. The catalysed reaction is tRNA(Ile) + L-isoleucine + ATP = L-isoleucyl-tRNA(Ile) + AMP + diphosphate. Its function is as follows. Catalyzes the attachment of isoleucine to tRNA(Ile). As IleRS can inadvertently accommodate and process structurally similar amino acids such as valine, to avoid such errors it has two additional distinct tRNA(Ile)-dependent editing activities. One activity is designated as 'pretransfer' editing and involves the hydrolysis of activated Val-AMP. The other activity is designated 'posttransfer' editing and involves deacylation of mischarged Val-tRNA(Ile). The polypeptide is Isoleucine--tRNA ligase (Staphylococcus saprophyticus subsp. saprophyticus (strain ATCC 15305 / DSM 20229 / NCIMB 8711 / NCTC 7292 / S-41)).